An 881-amino-acid chain; its full sequence is Phosphoenolpyruvate carboxylase (881 aa).

Residues H142 and K547 contribute to the active site.

The protein belongs to the PEPCase type 1 family. Mg(2+) is required as a cofactor.

It carries out the reaction oxaloacetate + phosphate = phosphoenolpyruvate + hydrogencarbonate. Functionally, forms oxaloacetate, a four-carbon dicarboxylic acid source for the tricarboxylic acid cycle. The chain is Phosphoenolpyruvate carboxylase from Hahella chejuensis (strain KCTC 2396).